Reading from the N-terminus, the 248-residue chain is UPF0173 metal-dependent hydrolase Hlac_1347 (248 aa).

The protein belongs to the UPF0173 family.

The sequence is that of UPF0173 metal-dependent hydrolase Hlac_1347 from Halorubrum lacusprofundi (strain ATCC 49239 / DSM 5036 / JCM 8891 / ACAM 34).